Reading from the N-terminus, the 418-residue chain is Gamma-glutamyl phosphate reductase (418 aa).

The protein belongs to the gamma-glutamyl phosphate reductase family.

Its subcellular location is the cytoplasm. It catalyses the reaction L-glutamate 5-semialdehyde + phosphate + NADP(+) = L-glutamyl 5-phosphate + NADPH + H(+). The protein operates within amino-acid biosynthesis; L-proline biosynthesis; L-glutamate 5-semialdehyde from L-glutamate: step 2/2. Its function is as follows. Catalyzes the NADPH-dependent reduction of L-glutamate 5-phosphate into L-glutamate 5-semialdehyde and phosphate. The product spontaneously undergoes cyclization to form 1-pyrroline-5-carboxylate. The polypeptide is Gamma-glutamyl phosphate reductase (Nitrosococcus oceani (strain ATCC 19707 / BCRC 17464 / JCM 30415 / NCIMB 11848 / C-107)).